The sequence spans 215 residues: Peptide methionine sulfoxide reductase MsrA (215 aa).

Cys58 is a catalytic residue.

Belongs to the MsrA Met sulfoxide reductase family.

The catalysed reaction is L-methionyl-[protein] + [thioredoxin]-disulfide + H2O = L-methionyl-(S)-S-oxide-[protein] + [thioredoxin]-dithiol. It catalyses the reaction [thioredoxin]-disulfide + L-methionine + H2O = L-methionine (S)-S-oxide + [thioredoxin]-dithiol. Has an important function as a repair enzyme for proteins that have been inactivated by oxidation. Catalyzes the reversible oxidation-reduction of methionine sulfoxide in proteins to methionine. The sequence is that of Peptide methionine sulfoxide reductase MsrA from Pseudomonas aeruginosa (strain LESB58).